The chain runs to 330 residues: Interleukin-12 subunit beta (330 aa).

The N-terminal stretch at 1-22 is a signal peptide; the sequence is MHPQQLVVSWFSLVLLASPIMA. Positions 23-106 constitute an Ig-like C2-type domain; it reads IWELEKNVYV…LSHSLLLLHK (84 aa). Cys50 and Cys90 are joined by a disulfide. 2 N-linked (GlcNAc...) asparagine glycosylation sites follow: Asn136 and Asn224. Residues 239–330 form the Fibronectin type-III domain; that stretch reads PPKNLQLKPL…WSEWASVSCS (92 aa).

It belongs to the IL-12B family. In terms of assembly, heterodimer with IL12A; disulfide-linked. The heterodimer is known as interleukin IL-12. Heterodimer with IL23A; disulfide-linked. The heterodimer is known as interleukin IL-23. Also secreted as a monomer. Interacts with NBR1; this interaction promotes IL-12 secretion.

It localises to the secreted. Cytokine that can act as a growth factor for activated T and NK cells, enhance the lytic activity of NK/lymphokine-activated killer cells, and stimulate the production of IFN-gamma by resting PBMC. In terms of biological role, associates with IL23A to form the IL-23 interleukin, a heterodimeric cytokine which functions in innate and adaptive immunity. IL-23 may constitute with IL-17 an acute response to infection in peripheral tissues. IL-23 binds to a heterodimeric receptor complex composed of IL12RB1 and IL23R, activates the Jak-Stat signaling cascade, stimulates memory rather than naive T-cells and promotes production of pro-inflammatory cytokines. IL-23 induces autoimmune inflammation and thus may be responsible for autoimmune inflammatory diseases and may be important for tumorigenesis. This chain is Interleukin-12 subunit beta (IL12B), found in Lama glama (Llama).